The sequence spans 248 residues: Ubiquinone biosynthesis O-methyltransferase (248 aa).

S-adenosyl-L-methionine is bound by residues arginine 41, glycine 72, aspartate 93, and methionine 136.

It belongs to the methyltransferase superfamily. UbiG/COQ3 family.

It carries out the reaction a 3-demethylubiquinol + S-adenosyl-L-methionine = a ubiquinol + S-adenosyl-L-homocysteine + H(+). The catalysed reaction is a 3-(all-trans-polyprenyl)benzene-1,2-diol + S-adenosyl-L-methionine = a 2-methoxy-6-(all-trans-polyprenyl)phenol + S-adenosyl-L-homocysteine + H(+). The protein operates within cofactor biosynthesis; ubiquinone biosynthesis. O-methyltransferase that catalyzes the 2 O-methylation steps in the ubiquinone biosynthetic pathway. The sequence is that of Ubiquinone biosynthesis O-methyltransferase from Brucella melitensis biotype 2 (strain ATCC 23457).